Here is a 116-residue protein sequence, read N- to C-terminus: MSSYAIVEACGKQMWIEEGKFYDFDKLPFSKGDVFSLSDILLVKMDDSAEIGQPYLTDKYSVELRVLQHFSGPKIRVYKMRSKKKTRKTFGHRSKLTRVLVQSISKKGVAQTTCFM.

This sequence belongs to the bacterial ribosomal protein bL21 family. In terms of assembly, part of the 50S ribosomal subunit.

It is found in the plastid. Its subcellular location is the chloroplast. Functionally, this protein binds to 23S rRNA. The polypeptide is Large ribosomal subunit protein bL21c (Emiliania huxleyi (Coccolithophore)).